Reading from the N-terminus, the 413-residue chain is Multifunctional CCA protein (413 aa).

The ATP site is built by glycine 8 and arginine 11. CTP-binding residues include glycine 8 and arginine 11. Mg(2+) contacts are provided by aspartate 21 and aspartate 23. ATP-binding residues include arginine 91, arginine 137, and arginine 140. CTP-binding residues include arginine 91, arginine 137, and arginine 140. The region spanning 228–329 (TGIHTLMVLA…IKIFDKADLW (102 aa)) is the HD domain.

This sequence belongs to the tRNA nucleotidyltransferase/poly(A) polymerase family. Bacterial CCA-adding enzyme type 1 subfamily. As to quaternary structure, monomer. Can also form homodimers and oligomers. It depends on Mg(2+) as a cofactor. The cofactor is Ni(2+).

The catalysed reaction is a tRNA precursor + 2 CTP + ATP = a tRNA with a 3' CCA end + 3 diphosphate. It carries out the reaction a tRNA with a 3' CCA end + 2 CTP + ATP = a tRNA with a 3' CCACCA end + 3 diphosphate. Catalyzes the addition and repair of the essential 3'-terminal CCA sequence in tRNAs without using a nucleic acid template. Adds these three nucleotides in the order of C, C, and A to the tRNA nucleotide-73, using CTP and ATP as substrates and producing inorganic pyrophosphate. tRNA 3'-terminal CCA addition is required both for tRNA processing and repair. Also involved in tRNA surveillance by mediating tandem CCA addition to generate a CCACCA at the 3' terminus of unstable tRNAs. While stable tRNAs receive only 3'-terminal CCA, unstable tRNAs are marked with CCACCA and rapidly degraded. The chain is Multifunctional CCA protein from Shewanella woodyi (strain ATCC 51908 / MS32).